Reading from the N-terminus, the 972-residue chain is FHF complex subunit HOOK-interacting protein 1B (972 aa).

4 disordered regions span residues 465–496 (APSP…VPRP), 510–547 (SLSG…AGEL), 573–642 (SAPY…PGSW), and 710–733 (SFTC…NQLP). Position 467 is a phosphoserine (S467). Residues 479–490 (GPGSPSVDSSSV) show a composition bias toward low complexity. 4 positions are modified to phosphoserine: S510, S523, S529, and S533. Residues 523–535 (SPGLSASPASSPG) are compositionally biased toward low complexity. Residues 618–627 (GLAGGAGEGP) show a composition bias toward gly residues. Residues S859 and S897 each carry the phosphoserine modification.

This sequence belongs to the FHIP family. Component of the FTS/Hook/FHIP complex (FHF complex), composed of AKTIP/FTS, FHIP1B, and one or more members of the Hook family of proteins HOOK1, HOOK2, and HOOK3. The FHF complex associates with the homotypic vesicular sorting complex (the HOPS complex).

Functionally, component of the FTS/Hook/FHIP complex (FHF complex). The FHF complex may function to promote vesicle trafficking and/or fusion via the homotypic vesicular protein sorting complex (the HOPS complex). FHF complex promotes the distribution of AP-4 complex to the perinuclear area of the cell. The sequence is that of FHF complex subunit HOOK-interacting protein 1B (FHIP1B) from Pongo abelii (Sumatran orangutan).